We begin with the raw amino-acid sequence, 426 residues long: Phosphoribosylamine--glycine ligase (426 aa).

Residues 113–320 (KSLMTEAKIP…LLELLYRAST (208 aa)) enclose the ATP-grasp domain. 139-200 (LESKSIPIVI…EEFMEGQEAS (62 aa)) is an ATP binding site. The Mg(2+) site is built by Glu290 and Asn292.

The protein belongs to the GARS family. It depends on Mg(2+) as a cofactor. Mn(2+) is required as a cofactor.

The catalysed reaction is 5-phospho-beta-D-ribosylamine + glycine + ATP = N(1)-(5-phospho-beta-D-ribosyl)glycinamide + ADP + phosphate + H(+). It functions in the pathway purine metabolism; IMP biosynthesis via de novo pathway; N(1)-(5-phospho-D-ribosyl)glycinamide from 5-phospho-alpha-D-ribose 1-diphosphate: step 2/2. This is Phosphoribosylamine--glycine ligase from Leptospira interrogans serogroup Icterohaemorrhagiae serovar copenhageni (strain Fiocruz L1-130).